A 62-amino-acid chain; its full sequence is Large ribosomal subunit protein uL30 (62 aa).

This sequence belongs to the universal ribosomal protein uL30 family. Part of the 50S ribosomal subunit.

The sequence is that of Large ribosomal subunit protein uL30 from Shouchella clausii (strain KSM-K16) (Alkalihalobacillus clausii).